We begin with the raw amino-acid sequence, 934 residues long: DNA topoisomerase 1 (934 aa).

The segment at 1–20 (MADPKTKGRGSGGNGSGRRL) is disordered. One can recognise a Toprim domain in the interval 18 to 142 (RRLVIVESPT…VKRMVFHEIT (125 aa)). Glu24 and Asp111 together coordinate Mg(2+). Residues 157–616 (DIDLVDAQET…FYFGGDHGVP (460 aa)) enclose the Topo IA-type catalytic domain. Positions 191-196 (SAGRVQ) are interaction with DNA. The active-site O-(5'-phospho-DNA)-tyrosine intermediate is Tyr342. 3 disordered regions span residues 746 to 765 (AAQG…RTGS), 842 to 892 (KRRG…KGDD), and 905 to 934 (LADR…AKRD). The segment covering 911–934 (RGPAKRPARKAARKVPAKKAAKRD) has biased composition (basic residues).

It belongs to the type IA topoisomerase family. Monomer. Mg(2+) serves as cofactor.

It carries out the reaction ATP-independent breakage of single-stranded DNA, followed by passage and rejoining.. Functionally, releases the supercoiling and torsional tension of DNA, which is introduced during the DNA replication and transcription, by transiently cleaving and rejoining one strand of the DNA duplex. Introduces a single-strand break via transesterification at a target site in duplex DNA. The scissile phosphodiester is attacked by the catalytic tyrosine of the enzyme, resulting in the formation of a DNA-(5'-phosphotyrosyl)-enzyme intermediate and the expulsion of a 3'-OH DNA strand. The free DNA strand then undergoes passage around the unbroken strand, thus removing DNA supercoils. Finally, in the religation step, the DNA 3'-OH attacks the covalent intermediate to expel the active-site tyrosine and restore the DNA phosphodiester backbone. This chain is DNA topoisomerase 1, found in Mycobacterium bovis (strain ATCC BAA-935 / AF2122/97).